The chain runs to 122 residues: Large ribosomal subunit protein uL14 (122 aa).

This sequence belongs to the universal ribosomal protein uL14 family. Part of the 50S ribosomal subunit. Forms a cluster with proteins L3 and L19. In the 70S ribosome, L14 and L19 interact and together make contacts with the 16S rRNA in bridges B5 and B8.

Functionally, binds to 23S rRNA. Forms part of two intersubunit bridges in the 70S ribosome. The chain is Large ribosomal subunit protein uL14 from Levilactobacillus brevis (strain ATCC 367 / BCRC 12310 / CIP 105137 / JCM 1170 / LMG 11437 / NCIMB 947 / NCTC 947) (Lactobacillus brevis).